We begin with the raw amino-acid sequence, 223 residues long: Sigma non-opioid intracellular receptor 1 (223 aa).

At 1–9 (MQWAAGRRW) the chain is on the lumenal side. The interval 2–8 (QWAAGRR) is targeting to endoplasmic reticulum-associated lipid droplets. The chain crosses the membrane as a helical span at residues 10 to 30 (AWITLFLTIVAVLIQAVWLWL). Over 31-223 (GTQSFVFQRE…LTTYLFGQDS (193 aa)) the chain is Cytoplasmic. Positions 99–106 (SLSEYVLL) are important for ligand-binding. The tract at residues 177–223 (VIPSTLAFALSDTIFSTQDFLTLFYTLRAYARGLRLELTTYLFGQDS) is C-terminal hydrophobic region.

It belongs to the ERG2 family. Homotrimer. Forms a ternary complex with ANK2 and ITPR3. The complex is disrupted by agonists. Interacts with KCNA4. Interacts with KCNA2; cocaine consumption leads to increased interaction. Interacts with RNF112 in an oxidative stress-regulated manner.

The protein resides in the nucleus inner membrane. It localises to the nucleus outer membrane. It is found in the nucleus envelope. Its subcellular location is the cytoplasmic vesicle. The protein localises to the endoplasmic reticulum membrane. The protein resides in the membrane. It localises to the lipid droplet. It is found in the cell junction. Its subcellular location is the cell membrane. The protein localises to the cell projection. The protein resides in the growth cone. It localises to the postsynaptic density membrane. Its function is as follows. Functions in lipid transport from the endoplasmic reticulum and is involved in a wide array of cellular functions probably through regulation of the biogenesis of lipid microdomains at the plasma membrane. Involved in the regulation of different receptors it plays a role in BDNF signaling and EGF signaling. Also regulates ion channels like the potassium channel and could modulate neurotransmitter release. Plays a role in calcium signaling through modulation together with ANK2 of the ITP3R-dependent calcium efflux at the endoplasmic reticulum. Plays a role in several other cell functions including proliferation, survival and death. Originally identified for its ability to bind various psychoactive drugs it is involved in learning processes, memory and mood alteration. Necessary for proper mitochondrial axonal transport in motor neurons, in particular the retrograde movement of mitochondria. Plays a role in protecting cells against oxidative stress-induced cell death via its interaction with RNF112. This Trichosurus vulpecula (Brush-tailed possum) protein is Sigma non-opioid intracellular receptor 1 (SIGMAR1).